The following is a 665-amino-acid chain: tRNA 5-methylaminomethyl-2-thiouridine biosynthesis bifunctional protein MnmC (665 aa).

The segment at 1 to 243 (MSQTSLHHAR…KWAMLAGERV (243 aa)) is tRNA (mnm(5)s(2)U34)-methyltransferase. Positions 268-665 (IGGGIASAMT…RKLLKGKPLN (398 aa)) are FAD-dependent cmnm(5)s(2)U34 oxidoreductase.

In the N-terminal section; belongs to the methyltransferase superfamily. tRNA (mnm(5)s(2)U34)-methyltransferase family. It in the C-terminal section; belongs to the DAO family. FAD is required as a cofactor.

It is found in the cytoplasm. The enzyme catalyses 5-aminomethyl-2-thiouridine(34) in tRNA + S-adenosyl-L-methionine = 5-methylaminomethyl-2-thiouridine(34) in tRNA + S-adenosyl-L-homocysteine + H(+). Its function is as follows. Catalyzes the last two steps in the biosynthesis of 5-methylaminomethyl-2-thiouridine (mnm(5)s(2)U) at the wobble position (U34) in tRNA. Catalyzes the FAD-dependent demodification of cmnm(5)s(2)U34 to nm(5)s(2)U34, followed by the transfer of a methyl group from S-adenosyl-L-methionine to nm(5)s(2)U34, to form mnm(5)s(2)U34. In Aeromonas salmonicida (strain A449), this protein is tRNA 5-methylaminomethyl-2-thiouridine biosynthesis bifunctional protein MnmC.